A 77-amino-acid polypeptide reads, in one-letter code: Acyl carrier protein (77 aa).

One can recognise a Carrier domain in the interval 2–77; that stretch reads AEVFDRVKEI…DAVDYINSKA (76 aa). Ser-37 is subject to O-(pantetheine 4'-phosphoryl)serine.

It belongs to the acyl carrier protein (ACP) family. In terms of processing, 4'-phosphopantetheine is transferred from CoA to a specific serine of apo-ACP by AcpS. This modification is essential for activity because fatty acids are bound in thioester linkage to the sulfhydryl of the prosthetic group.

It is found in the cytoplasm. It participates in lipid metabolism; fatty acid biosynthesis. In terms of biological role, carrier of the growing fatty acid chain in fatty acid biosynthesis. The protein is Acyl carrier protein of Oceanobacillus iheyensis (strain DSM 14371 / CIP 107618 / JCM 11309 / KCTC 3954 / HTE831).